Here is a 1778-residue protein sequence, read N- to C-terminus: Protein TIC 214 (1778 aa).

6 helical membrane-spanning segments follow: residues 18 to 38, 67 to 87, 90 to 110, 132 to 152, 175 to 195, and 226 to 246; these read IINS…FSIG, FIAG…HLAL, PHTI…WNNN, VFLN…SSML, VGWL…LVWI, and IFSI…PSPI. A disordered region spans residues 1498-1520; it reads GQGELESDNEKKRNPESALSNQE.

This sequence belongs to the TIC214 family. Part of the Tic complex.

It localises to the plastid. The protein localises to the chloroplast inner membrane. Functionally, involved in protein precursor import into chloroplasts. May be part of an intermediate translocation complex acting as a protein-conducting channel at the inner envelope. In Arabis hirsuta (Hairy rock-cress), this protein is Protein TIC 214.